The primary structure comprises 33 residues: Cytochrome b6-f complex subunit 8 (33 aa).

The helical transmembrane segment at Ile-2–Val-22 threads the bilayer.

The protein belongs to the PetN family. The 4 large subunits of the cytochrome b6-f complex are cytochrome b6, subunit IV (17 kDa polypeptide, PetD), cytochrome f and the Rieske protein, while the 4 small subunits are PetG, PetL, PetM and PetN. The complex functions as a dimer.

The protein localises to the cellular thylakoid membrane. Functionally, component of the cytochrome b6-f complex, which mediates electron transfer between photosystem II (PSII) and photosystem I (PSI), cyclic electron flow around PSI, and state transitions. In Prochlorococcus marinus (strain MIT 9301), this protein is Cytochrome b6-f complex subunit 8.